The sequence spans 99 residues: Putative regulatory protein Kole_1849 (99 aa).

The protein belongs to the RemA family.

This Kosmotoga olearia (strain ATCC BAA-1733 / DSM 21960 / TBF 19.5.1) protein is Putative regulatory protein Kole_1849.